A 244-amino-acid polypeptide reads, in one-letter code: Putative membrane peptidase YdiL (244 aa).

6 helical membrane-spanning segments follow: residues 7 to 27, 44 to 64, 80 to 100, 127 to 147, 159 to 179, and 202 to 222; these read FIILTYIIMQFSALIAIPLLF, AQGLWSVISFIACLVVVLLIL, IGLSILWAIAGFFIALFSQGI, AVPLMIIVSSIVGPILEEIIF, TNFFFAGLISSVIFGIVHADL, and IWVPIFAHLMMNTFVVIMQLE. Active-site proton donor/acceptor residues include Glu-143 and His-176.

Belongs to the peptidase U48 family.

It localises to the cell membrane. May function as endopeptidase which proteolytically removes the C-terminal three residues of farnesylated peptides containing the CAAX motif where C is cysteine, A is an aliphatic amino acid and X is any amino acid. The chain is Putative membrane peptidase YdiL (ydiL) from Bacillus subtilis (strain 168).